The primary structure comprises 1057 residues: Structural maintenance of chromosomes protein 6B (1057 aa).

In terms of domain architecture, Zinc-hook spans 22–1047 (ILRIKVENFM…ISMVKSHERI (1026 aa)). Residue 49–56 (GQNGSGKS) participates in ATP binding. Residues 135 to 448 (KVSNKRDELR…NDLKKHQTNK (314 aa)) adopt a coiled-coil conformation. Residues 449 to 632 (VTAFGGDRVI…PPLSRRPSRL (184 aa)) are flexible hinge. Residues 633–904 (CASFDDQIKD…QDHREKLMAC (272 aa)) are a coiled coil. Positions 818–828 (KNKRKESDQKA) are enriched in basic and acidic residues. Positions 818–845 (KNKRKESDQKASEICPESEIESLGPWDG) are disordered.

This sequence belongs to the SMC family. SMC6 subfamily. Forms a heterodimer with SMC5. The SMC5-SMC6 complex is composed of the SMC5 and SMC6 heterodimer attached via their hinge domain and from the non-SMC subunit NSE4A or NSE4B. As to expression, expressed in seedlings, rosette leaves and floral buds.

It is found in the nucleus. The protein resides in the chromosome. Core component of the SMC5-SMC6 complex that promotes sister chromatid alignment after DNA damage and facilitates double-stranded DNA breaks (DSBs) repair via homologous recombination between sister chromatids. The chain is Structural maintenance of chromosomes protein 6B (SMC6B) from Arabidopsis thaliana (Mouse-ear cress).